The following is a 189-amino-acid chain: MEVNKKQLADIFGASIRTIQNWQEQGMPVLRGGGKGNEVLYDSAAVIRWYAERDAEIENEKLRREVEELRQASETDLQPGTIEYERHRLTRAQADAQELKNARDSAEVVETAFCTFVLSRIAGEIASILDGIPLSVQRRFPELENRHVDFLKRDIIKAMNKAAALDELIPGLLSEYNRADRQYAGGSRS.

This sequence belongs to the terminase small subunit family.

This is Prophage DNA-packing protein NohA (nohA) from Escherichia coli (strain K12).